We begin with the raw amino-acid sequence, 491 residues long: Aspartyl/glutamyl-tRNA(Asn/Gln) amidotransferase subunit B (491 aa).

Belongs to the GatB/GatE family. GatB subfamily. Heterotrimer of A, B and C subunits.

It catalyses the reaction L-glutamyl-tRNA(Gln) + L-glutamine + ATP + H2O = L-glutaminyl-tRNA(Gln) + L-glutamate + ADP + phosphate + H(+). It carries out the reaction L-aspartyl-tRNA(Asn) + L-glutamine + ATP + H2O = L-asparaginyl-tRNA(Asn) + L-glutamate + ADP + phosphate + 2 H(+). Functionally, allows the formation of correctly charged Asn-tRNA(Asn) or Gln-tRNA(Gln) through the transamidation of misacylated Asp-tRNA(Asn) or Glu-tRNA(Gln) in organisms which lack either or both of asparaginyl-tRNA or glutaminyl-tRNA synthetases. The reaction takes place in the presence of glutamine and ATP through an activated phospho-Asp-tRNA(Asn) or phospho-Glu-tRNA(Gln). This chain is Aspartyl/glutamyl-tRNA(Asn/Gln) amidotransferase subunit B, found in Paraburkholderia phymatum (strain DSM 17167 / CIP 108236 / LMG 21445 / STM815) (Burkholderia phymatum).